The chain runs to 380 residues: Cytochrome b (380 aa).

The next 4 membrane-spanning stretches (helical) occupy residues 34–54, 78–99, 114–134, and 179–199; these read FGSL…LLAM, WLIR…YLHI, WNTG…GYVL, and FFAL…IHLT. The heme b site is built by His84 and His98. Residues His183 and His197 each coordinate heme b. An a ubiquinone-binding site is contributed by His202. Helical transmembrane passes span 227–247, 289–309, 321–341, and 348–368; these read LKDI…ALFS, LGGV…PFLH, LSQL…WVGS, and FIII…ILFP.

The protein belongs to the cytochrome b family. As to quaternary structure, the cytochrome bc1 complex contains 11 subunits: 3 respiratory subunits (MT-CYB, CYC1 and UQCRFS1), 2 core proteins (UQCRC1 and UQCRC2) and 6 low-molecular weight proteins (UQCRH/QCR6, UQCRB/QCR7, UQCRQ/QCR8, UQCR10/QCR9, UQCR11/QCR10 and a cleavage product of UQCRFS1). This cytochrome bc1 complex then forms a dimer. Requires heme b as cofactor.

It is found in the mitochondrion inner membrane. Its function is as follows. Component of the ubiquinol-cytochrome c reductase complex (complex III or cytochrome b-c1 complex) that is part of the mitochondrial respiratory chain. The b-c1 complex mediates electron transfer from ubiquinol to cytochrome c. Contributes to the generation of a proton gradient across the mitochondrial membrane that is then used for ATP synthesis. The chain is Cytochrome b (MT-CYB) from Ardenna tenuirostris (Short-tailed shearwater).